A 111-amino-acid polypeptide reads, in one-letter code: Rhodanese domain-containing protein CG4456 (111 aa).

Residues 12–110 (NHPDVYLIDV…SWNEWAQKEG (99 aa)) enclose the Rhodanese domain.

The chain is Rhodanese domain-containing protein CG4456 from Drosophila melanogaster (Fruit fly).